The following is a 482-amino-acid chain: Hydrogenase transcriptional regulatory protein HoxA (482 aa).

The region spanning 7-121 (TVLVVDDETR…HLIDTVRQAV (115 aa)) is the Response regulatory domain. D55 is modified (4-aspartylphosphate). The 228-residue stretch at 167–394 (APGSPLDAVC…LRNEIYRAVA (228 aa)) folds into the Sigma-54 factor interaction domain. ATP contacts are provided by residues 193 to 200 (GESGTGKE) and 265 to 274 (EIGDTSPAFQ). Positions 456–475 (KTHAAKELGLSRVGLRQKLL) form a DNA-binding region, H-T-H motif.

The protein resides in the cytoplasm. Functionally, probable member of the two-component regulatory system involved in the regulation of the hydrogenase activity. HoxA is probably phosphorylated by a sensory component (which could be HoxX) and then acts in conjunction with sigma-54 as a transcriptional activator. The protein is Hydrogenase transcriptional regulatory protein HoxA (hoxA) of Cupriavidus necator (strain ATCC 17699 / DSM 428 / KCTC 22496 / NCIMB 10442 / H16 / Stanier 337) (Ralstonia eutropha).